The primary structure comprises 185 residues: Elongation factor P (185 aa).

It belongs to the elongation factor P family.

Its subcellular location is the cytoplasm. It functions in the pathway protein biosynthesis; polypeptide chain elongation. Functionally, involved in peptide bond synthesis. Stimulates efficient translation and peptide-bond synthesis on native or reconstituted 70S ribosomes in vitro. Probably functions indirectly by altering the affinity of the ribosome for aminoacyl-tRNA, thus increasing their reactivity as acceptors for peptidyl transferase. The chain is Elongation factor P from Staphylococcus epidermidis (strain ATCC 35984 / DSM 28319 / BCRC 17069 / CCUG 31568 / BM 3577 / RP62A).